The primary structure comprises 455 residues: Probable glycine dehydrogenase (decarboxylating) subunit 1 (455 aa).

The protein belongs to the GcvP family. N-terminal subunit subfamily. In terms of assembly, the glycine cleavage system is composed of four proteins: P, T, L and H. In this organism, the P 'protein' is a heterodimer of two subunits.

The enzyme catalyses N(6)-[(R)-lipoyl]-L-lysyl-[glycine-cleavage complex H protein] + glycine + H(+) = N(6)-[(R)-S(8)-aminomethyldihydrolipoyl]-L-lysyl-[glycine-cleavage complex H protein] + CO2. Functionally, the glycine cleavage system catalyzes the degradation of glycine. The P protein binds the alpha-amino group of glycine through its pyridoxal phosphate cofactor; CO(2) is released and the remaining methylamine moiety is then transferred to the lipoamide cofactor of the H protein. This is Probable glycine dehydrogenase (decarboxylating) subunit 1 from Francisella tularensis subsp. holarctica (strain LVS).